The primary structure comprises 421 residues: D-amino acid dehydrogenase (421 aa).

An FAD-binding site is contributed by 3–17 (VIVLGSGVIGVASAY).

It belongs to the DadA oxidoreductase family. The cofactor is FAD.

It carries out the reaction a D-alpha-amino acid + A + H2O = a 2-oxocarboxylate + AH2 + NH4(+). It participates in amino-acid degradation; D-alanine degradation; NH(3) and pyruvate from D-alanine: step 1/1. Functionally, oxidative deamination of D-amino acids. In Acinetobacter baumannii (strain AB307-0294), this protein is D-amino acid dehydrogenase.